Here is a 279-residue protein sequence, read N- to C-terminus: Armadillo repeat-containing protein 1 (279 aa).

The stretch at 36 to 78 is one ARM repeat; it reads GCLPGLILFLDHPSPPVVHSALLALRYLAECRANREKMKGELG. Residues 236–257 form a disordered region; that stretch reads EYLPEDESPSKEQDKAVSRVGS. The segment covering 243 to 252 has biased composition (basic and acidic residues); that stretch reads SPSKEQDKAV.

In terms of assembly, interacts with mitochondrial contact site and cristae organizing system (MICOS) complex components IMMT/MIC60 and MICOS10/MIC10. Interacts with mitochondrial outer membrane sorting assembly machinery (SAM) complex components SAMM50 and MTX1.

The protein localises to the cytoplasm. It is found in the mitochondrion. It localises to the mitochondrion outer membrane. Its function is as follows. In association with mitochondrial contact site and cristae organizing system (MICOS) complex components and mitochondrial outer membrane sorting assembly machinery (SAM) complex components may regulate mitochondrial dynamics playing a role in determining mitochondrial length, distribution and motility. The sequence is that of Armadillo repeat-containing protein 1 (ARMC1) from Gallus gallus (Chicken).